A 1480-amino-acid polypeptide reads, in one-letter code: Cystic fibrosis transmembrane conductance regulator (1480 aa).

Residues 1-77 (MQRSPLEKAS…KLINALRRCF (77 aa)) lie on the Cytoplasmic side of the membrane. Residues 78–98 (FWRFMFYGILLYLGEVTKAVQ) form a helical membrane-spanning segment. The 285-residue stretch at 81-365 (FMFYGILLYL…WAVQTWYDSL (285 aa)) folds into the ABC transmembrane type-1 1 domain. Topologically, residues 99–122 (PLLLGRIIASYDPDNKTERSIAIY) are extracellular. A helical transmembrane segment spans residues 123–146 (LGIGLCLLFIVRTLLLHPAIFGLH). Over 147-195 (HIGMQMRIAMFSLIYKKTLKLSSRVLDKISIGQLVSLLSNNLNKFDEGL) the chain is Cytoplasmic. Residues 196 to 216 (ALAHFVWIAPLQVALLMGLIW) form a helical membrane-spanning segment. Residues 217-222 (ELLQAS) lie on the Extracellular side of the membrane. A helical transmembrane segment spans residues 223–243 (VFCGLGFLIVLALFQAGLGRM). Residues 244–298 (MMKYRDQRAGKINERLVITSEMIENIQSVKAYCWEEAMEKMIENLRQTELKLTRK) lie on the Cytoplasmic side of the membrane. The chain crosses the membrane as a helical span at residues 299–319 (AAYVRYFNSSAFFFSGFFVVF). Residues 320-339 (LSVLPYALIKGIILRKIFTT) lie on the Extracellular side of the membrane. A helical transmembrane segment spans residues 340–358 (ISFCIVLRMAVTRQFPWAV). Residues 359–858 (QTWYDSLGAI…YLRYITLHKS (500 aa)) are Cytoplasmic-facing. ATP-binding positions include Trp-401, Ser-434, 458–465 (GSTGAGKT), and Gln-493. Residues 423-646 (NGHDNLFFSN…RPDFSSKLMG (224 aa)) enclose the ABC transporter 1 domain. Cys-524 carries the S-palmitoyl cysteine lipid modification. Phosphoserine is present on residues Ser-549 and Ser-660. The disordered R region stretch occupies residues 654–831 (SSERRNSILT…EEINEEDLKE (178 aa)). The residue at position 670 (Ser-670) is a Phosphoserine; by PKA. Position 686 is a phosphoserine (Ser-686). Lys-688 participates in a covalent cross-link: Glycyl lysine isopeptide (Lys-Gly) (interchain with G-Cter in ubiquitin). Residues Ser-700 and Ser-712 each carry the phosphoserine modification. Phosphothreonine is present on Thr-717. A phosphoserine mark is found at Ser-737, Ser-753, Ser-768, Ser-790, Ser-795, and Ser-813. A helical membrane pass occupies residues 859-879 (LIFVLIWCLVIFLAEVAASLV). In terms of domain architecture, ABC transmembrane type-1 2 spans 859-1155 (LIFVLIWCLV…AVNSSIDVDS (297 aa)). Over 880 to 918 (VLWLLGNTSFQDKGNSTYSRNNSYAVIITNTSSYYVFYI) the chain is Extracellular. 3 N-linked (GlcNAc...) asparagine glycosylation sites follow: Asn-894, Asn-900, and Asn-909. Residues 919-939 (YVGVADTLLALGFFRGLPLVH) traverse the membrane as a discontinuously helical segment. Residues 940-990 (TLITVSKILHHKMLHSVLQAPMSTLNTLKAGGILNRFSKDIAILDDLLPLT) lie on the Cytoplasmic side of the membrane. Residues 991 to 1011 (IFDFIQLLLIVIGAIAVVSVL) form a helical membrane-spanning segment. Over 1012-1013 (QP) the chain is Extracellular. Residues 1014-1034 (YIFLATVPVIAAFILLRAYFL) traverse the membrane as a helical segment. At 1035–1095 (QTSQQLKQLE…TANWFLYLST (61 aa)) the chain is on the cytoplasmic side. Residues 1096 to 1116 (LRWFQMRIEMIFVIFFIAVTF) form a helical membrane-spanning segment. Over 1117-1130 (ISILTTGEGEGTVG) the chain is Extracellular. The chain crosses the membrane as a helical span at residues 1131 to 1151 (IILTLAMNIMSTLQWAVNSSI). Over 1152–1480 (DVDSLMRSVS…TEEEVQETRL (329 aa)) the chain is Cytoplasmic. An ABC transporter 2 domain is found at 1210 to 1443 (MTIKDLTAKY…KSLFQQAISH (234 aa)). ATP contacts are provided by residues Tyr-1219 and 1244-1251 (GRTGSGKS). Positions 1386 to 1480 (RALKQAFADC…TEEEVQETRL (95 aa)) are interaction with GORASP2. Cys-1395 is lipidated: S-palmitoyl cysteine. 2 positions are modified to phosphoserine: Ser-1444 and Ser-1456. The tract at residues 1452–1480 (HRNSSKYKSRPQIASLKEETEEEVQETRL) is disordered. Residues 1470-1480 (ETEEEVQETRL) are compositionally biased toward acidic residues. The PDZ-binding motif lies at 1478–1480 (TRL).

The protein belongs to the ABC transporter superfamily. ABCC family. CFTR transporter (TC 3.A.1.202) subfamily. Monomer; does not require oligomerization for channel activity. May form oligomers in the membrane. Interacts with SLC26A3, SLC26A6 and NHERF1. Interacts with SHANK2. Interacts with MYO6. Interacts (via C-terminus) with GOPC (via PDZ domain); this promotes CFTR internalization and thereby decreases channel activity. Interacts with SLC4A7 through NHERF1. Found in a complex with MYO5B and RAB11A. Interacts with ANO1. Interacts with SLC26A8. Interacts with AHCYL1; the interaction increases CFTR activity. Interacts with CSE1L. The core-glycosylated form interacts with GORASP2 (via PDZ GRASP-type 1 domain) in respone to ER stress. Interacts with MARCHF2; the interaction leads to CFTR ubiqtuitination and degradation. Interacts with ADGRG2. In terms of processing, N-glycosylated. Post-translationally, phosphorylated; cAMP treatment promotes phosphorylation and activates the channel. Dephosphorylation decreases the ATPase activity (in vitro). Phosphorylation at PKA sites activates the channel. Phosphorylation at PKC sites enhances the response to phosphorylation by PKA. Phosphorylated by AMPK; this inhibits channel activity. Ubiquitinated, leading to its degradation in the lysosome. Deubiquitination by USP10 in early endosomes enhances its endocytic recycling to the cell membrane. Ubiquitinated by RNF185 during ER stress. Ubiquitinated by MARCHF2.

Its subcellular location is the apical cell membrane. It is found in the early endosome membrane. It localises to the cell membrane. The protein resides in the recycling endosome membrane. The protein localises to the endoplasmic reticulum membrane. Its subcellular location is the nucleus. The enzyme catalyses ATP + H2O + closed Cl(-) channel = ADP + phosphate + open Cl(-) channel.. It carries out the reaction chloride(in) = chloride(out). The catalysed reaction is hydrogencarbonate(in) = hydrogencarbonate(out). It catalyses the reaction ATP + H2O = ADP + phosphate + H(+). Its function is as follows. Epithelial ion channel that plays an important role in the regulation of epithelial ion and water transport and fluid homeostasis. Mediates the transport of chloride ions across the cell membrane. Possesses an intrinsic ATPase activity and utilizes ATP to gate its channel; the passive flow of anions through the channel is gated by cycles of ATP binding and hydrolysis by the ATP-binding domains. The ion channel is also permeable to HCO(3)(-); selectivity depends on the extracellular chloride concentration. Exerts its function also by modulating the activity of other ion channels and transporters. Contributes to the regulation of the pH and the ion content of the epithelial fluid layer. Modulates the activity of the epithelial sodium channel (ENaC) complex, in part by regulating the cell surface expression of the ENaC complex. May regulate bicarbonate secretion and salvage in epithelial cells by regulating the transporter SLC4A7. Can inhibit the chloride channel activity of ANO1. Plays a role in the chloride and bicarbonate homeostasis during sperm epididymal maturation and capacitation. The chain is Cystic fibrosis transmembrane conductance regulator from Plecturocebus moloch (Dusky titi monkey).